Here is a 269-residue protein sequence, read N- to C-terminus: Diaminopimelate epimerase (269 aa).

The substrate site is built by Asn-20 and Asn-63. Cys-72 functions as the Proton donor in the catalytic mechanism. Substrate contacts are provided by residues 73 to 74 (GN), Asn-179, and 197 to 198 (ER). Cys-207 functions as the Proton acceptor in the catalytic mechanism. 208–209 (GT) is a substrate binding site.

It belongs to the diaminopimelate epimerase family. As to quaternary structure, homodimer.

The protein localises to the cytoplasm. It catalyses the reaction (2S,6S)-2,6-diaminopimelate = meso-2,6-diaminopimelate. Its pathway is amino-acid biosynthesis; L-lysine biosynthesis via DAP pathway; DL-2,6-diaminopimelate from LL-2,6-diaminopimelate: step 1/1. Functionally, catalyzes the stereoinversion of LL-2,6-diaminopimelate (L,L-DAP) to meso-diaminopimelate (meso-DAP), a precursor of L-lysine and an essential component of the bacterial peptidoglycan. This Chlamydia muridarum (strain MoPn / Nigg) protein is Diaminopimelate epimerase.